Reading from the N-terminus, the 240-residue chain is UDP-2,3-diacylglucosamine hydrolase (240 aa).

Positions 8, 10, 41, 79, and 114 each coordinate Mn(2+). Substrate is bound at residue 79–80; that stretch reads NR. 5 residues coordinate substrate: Asp122, Ser160, Asn164, Lys167, and His195. Residues His195 and His197 each contribute to the Mn(2+) site.

It belongs to the LpxH family. It depends on Mn(2+) as a cofactor.

The protein resides in the cell inner membrane. It carries out the reaction UDP-2-N,3-O-bis[(3R)-3-hydroxytetradecanoyl]-alpha-D-glucosamine + H2O = 2-N,3-O-bis[(3R)-3-hydroxytetradecanoyl]-alpha-D-glucosaminyl 1-phosphate + UMP + 2 H(+). It participates in glycolipid biosynthesis; lipid IV(A) biosynthesis; lipid IV(A) from (3R)-3-hydroxytetradecanoyl-[acyl-carrier-protein] and UDP-N-acetyl-alpha-D-glucosamine: step 4/6. In terms of biological role, hydrolyzes the pyrophosphate bond of UDP-2,3-diacylglucosamine to yield 2,3-diacylglucosamine 1-phosphate (lipid X) and UMP by catalyzing the attack of water at the alpha-P atom. Involved in the biosynthesis of lipid A, a phosphorylated glycolipid that anchors the lipopolysaccharide to the outer membrane of the cell. This is UDP-2,3-diacylglucosamine hydrolase from Escherichia fergusonii (strain ATCC 35469 / DSM 13698 / CCUG 18766 / IAM 14443 / JCM 21226 / LMG 7866 / NBRC 102419 / NCTC 12128 / CDC 0568-73).